The sequence spans 729 residues: Ribosomal RNA large subunit methyltransferase K/L (729 aa).

A THUMP domain is found at 47 to 158 (TFYRLCLWSR…KNELTLALDL (112 aa)).

The protein belongs to the methyltransferase superfamily. RlmKL family.

Its subcellular location is the cytoplasm. It catalyses the reaction guanosine(2445) in 23S rRNA + S-adenosyl-L-methionine = N(2)-methylguanosine(2445) in 23S rRNA + S-adenosyl-L-homocysteine + H(+). The enzyme catalyses guanosine(2069) in 23S rRNA + S-adenosyl-L-methionine = N(2)-methylguanosine(2069) in 23S rRNA + S-adenosyl-L-homocysteine + H(+). Its function is as follows. Specifically methylates the guanine in position 2445 (m2G2445) and the guanine in position 2069 (m7G2069) of 23S rRNA. This Dichelobacter nodosus (strain VCS1703A) protein is Ribosomal RNA large subunit methyltransferase K/L.